A 113-amino-acid chain; its full sequence is Nucleoid-associated protein SYNW0027 (113 aa).

This sequence belongs to the YbaB/EbfC family. Homodimer.

The protein localises to the cytoplasm. The protein resides in the nucleoid. Its function is as follows. Binds to DNA and alters its conformation. May be involved in regulation of gene expression, nucleoid organization and DNA protection. The polypeptide is Nucleoid-associated protein SYNW0027 (Parasynechococcus marenigrum (strain WH8102)).